Consider the following 575-residue polypeptide: Urease subunit alpha (575 aa).

Positions Gly137 to Phe575 constitute a Urease domain. Positions 142, 144, and 225 each coordinate Ni(2+). At Lys225 the chain carries N6-carboxylysine. His227 is a substrate binding site. His254 and His280 together coordinate Ni(2+). His328 acts as the Proton donor in catalysis. A Ni(2+)-binding site is contributed by Asp368.

Belongs to the metallo-dependent hydrolases superfamily. Urease alpha subunit family. Heterotrimer of UreA (gamma), UreB (beta) and UreC (alpha) subunits. Three heterotrimers associate to form the active enzyme. The cofactor is Ni cation. In terms of processing, carboxylation allows a single lysine to coordinate two nickel ions.

The protein localises to the cytoplasm. The catalysed reaction is urea + 2 H2O + H(+) = hydrogencarbonate + 2 NH4(+). Its pathway is nitrogen metabolism; urea degradation; CO(2) and NH(3) from urea (urease route): step 1/1. This is Urease subunit alpha from Leptothrix cholodnii (strain ATCC 51168 / LMG 8142 / SP-6) (Leptothrix discophora (strain SP-6)).